A 131-amino-acid chain; its full sequence is Neo-calmodulin (131 aa).

EF-hand domains are found at residues 1–32 (EFKEAFSLFDKDGDGTITTKELGTVMRSLGQN), 33–68 (PTEAELQDMINEVDADGNGTIDFPEFLTMMARKMKD), 70–105 (DSEEEIREAFRVFDKDSNGYISAAELRHVMTNLGEK), and 106–131 (LTDEEVDEMIREADIDGDGQVNYEEF). Asp10, Asp12, Asp14, Thr16, Glu21, Asp46, Asp48, Asn50, Thr52, Glu57, Asp83, Asp85, Asn87, Tyr89, Glu94, Asp119, Asp121, Asp123, Gln125, and Glu130 together coordinate Ca(2+).

The protein belongs to the calmodulin family.

This chain is Neo-calmodulin, found in Gallus gallus (Chicken).